Consider the following 297-residue polypeptide: Phosphoribosylaminoimidazole-succinocarboxamide synthase (297 aa).

The protein belongs to the SAICAR synthetase family.

It catalyses the reaction 5-amino-1-(5-phospho-D-ribosyl)imidazole-4-carboxylate + L-aspartate + ATP = (2S)-2-[5-amino-1-(5-phospho-beta-D-ribosyl)imidazole-4-carboxamido]succinate + ADP + phosphate + 2 H(+). It participates in purine metabolism; IMP biosynthesis via de novo pathway; 5-amino-1-(5-phospho-D-ribosyl)imidazole-4-carboxamide from 5-amino-1-(5-phospho-D-ribosyl)imidazole-4-carboxylate: step 1/2. The chain is Phosphoribosylaminoimidazole-succinocarboxamide synthase from Mycobacterium sp. (strain JLS).